A 351-amino-acid polypeptide reads, in one-letter code: Methionine import ATP-binding protein MetN (351 aa).

The 246-residue stretch at 2 to 247 (ITTSGLTKVY…PGSELAAALF (246 aa)) folds into the ABC transporter domain. 38-45 (GQSGAGKS) contacts ATP.

This sequence belongs to the ABC transporter superfamily. Methionine importer (TC 3.A.1.24) family. The complex is composed of two ATP-binding proteins (MetN), two transmembrane proteins (MetI) and a solute-binding protein (MetQ).

It is found in the cell membrane. The enzyme catalyses L-methionine(out) + ATP + H2O = L-methionine(in) + ADP + phosphate + H(+). It carries out the reaction D-methionine(out) + ATP + H2O = D-methionine(in) + ADP + phosphate + H(+). Functionally, part of the ABC transporter complex MetNIQ involved in methionine import. Responsible for energy coupling to the transport system. The polypeptide is Methionine import ATP-binding protein MetN (Streptomyces coelicolor (strain ATCC BAA-471 / A3(2) / M145)).